Consider the following 340-residue polypeptide: Heat-inducible transcription repressor HrcA (340 aa).

This sequence belongs to the HrcA family.

Its function is as follows. Negative regulator of class I heat shock genes (grpE-dnaK-dnaJ and groELS operons). Prevents heat-shock induction of these operons. The protein is Heat-inducible transcription repressor HrcA of Phytoplasma australiense.